Consider the following 499-residue polypeptide: Probable mitochondrial-processing peptidase subunit alpha-2, chloroplastic/mitochondrial (499 aa).

It belongs to the peptidase M16 family. In terms of assembly, heterodimer of alpha and beta subunits, forming the mitochondrial processing protease (MPP) in which subunit alpha is involved in substrate recognition and binding and subunit beta is the catalytic subunit. Component of the ubiquinol-cytochrome c oxidoreductase (cytochrome b-c1 complex, complex III, CIII), a multisubunit enzyme composed of 10 subunits. The complex is composed of 3 respiratory subunits cytochrome b (MT-CYB), cytochrome c1 (CYC1-1 or CYC1-2) and Rieske protein (UCR1-1 or UCR1-2), 2 core protein subunits MPPalpha1 (or MPPalpha2) and MPPB, and 5 low-molecular weight protein subunits QCR7-1 (or QCR7-2), UCRQ-1 (or UCRQ-2), QCR9, UCRY and probably QCR6-1 (or QCR6-2). The complex exists as an obligatory dimer and forms supercomplexes (SCs) in the inner mitochondrial membrane with NADH-ubiquinone oxidoreductase (complex I, CI), resulting in different assemblies (supercomplexes SCI(1)III(2) and SCI(2)III(4)). Interacts with TIM23-2.

The protein resides in the plastid. It is found in the chloroplast stroma. It localises to the mitochondrion matrix. Its subcellular location is the mitochondrion inner membrane. Its function is as follows. Substrate recognition and binding subunit of the essential mitochondrial processing protease (MPP), which cleaves the mitochondrial sequence off newly imported precursors proteins. Component of the ubiquinol-cytochrome c oxidoreductase, a multisubunit transmembrane complex that is part of the mitochondrial electron transport chain which drives oxidative phosphorylation. The respiratory chain contains 3 multisubunit complexes succinate dehydrogenase (complex II, CII), ubiquinol-cytochrome c oxidoreductase (cytochrome b-c1 complex, complex III, CIII) and cytochrome c oxidase (complex IV, CIV), that cooperate to transfer electrons derived from NADH and succinate to molecular oxygen, creating an electrochemical gradient over the inner membrane that drives transmembrane transport and the ATP synthase. The cytochrome b-c1 complex catalyzes electron transfer from ubiquinol to cytochrome c, linking this redox reaction to translocation of protons across the mitochondrial inner membrane, with protons being carried across the membrane as hydrogens on the quinol. In the process called Q cycle, 2 protons are consumed from the matrix, 4 protons are released into the intermembrane space and 2 electrons are passed to cytochrome c. This Arabidopsis thaliana (Mouse-ear cress) protein is Probable mitochondrial-processing peptidase subunit alpha-2, chloroplastic/mitochondrial (MPPalpha2).